Consider the following 455-residue polypeptide: Kynurenine 3-monooxygenase (455 aa).

Belongs to the aromatic-ring hydroxylase family. KMO subfamily. FAD serves as cofactor.

It carries out the reaction L-kynurenine + NADPH + O2 + H(+) = 3-hydroxy-L-kynurenine + NADP(+) + H2O. It participates in cofactor biosynthesis; NAD(+) biosynthesis; quinolinate from L-kynurenine: step 1/3. Catalyzes the hydroxylation of L-kynurenine (L-Kyn) to form 3-hydroxy-L-kynurenine (L-3OHKyn). Required for synthesis of quinolinic acid. In Xanthomonas oryzae pv. oryzae (strain PXO99A), this protein is Kynurenine 3-monooxygenase.